We begin with the raw amino-acid sequence, 290 residues long: MHSKPTWLRAKAPAGKVFNETLNTVKLHNLHTVCEEAACPNIGECWNKRHATVMILGSVCTRACAFCNVATGIPDKLDPHEPENLAKAIKKLNLKHVVITSVDRDDLSDGGANQFIRCIEEIRKITSETTIEILTPDFLNKKGAFEAIAIASPDVYNHNIETVPRLYAKIRPRARYFHSLYLLKMVKQINPKLFTKSGLMVGLGETKEEIFQVMDDLRSAEVDFITIGQYLQPTPKHAKIDRYVTPEEFEHYKYIAYSKGFLVVASSPLTRSSYHAEEDFNRLAAAKTST.

7 residues coordinate [4Fe-4S] cluster: Cys34, Cys39, Cys45, Cys60, Cys64, Cys67, and Ser273. In terms of domain architecture, Radical SAM core spans 46–262 (WNKRHATVMI…KYIAYSKGFL (217 aa)).

This sequence belongs to the radical SAM superfamily. Lipoyl synthase family. Requires [4Fe-4S] cluster as cofactor.

The protein resides in the cytoplasm. It catalyses the reaction [[Fe-S] cluster scaffold protein carrying a second [4Fe-4S](2+) cluster] + N(6)-octanoyl-L-lysyl-[protein] + 2 oxidized [2Fe-2S]-[ferredoxin] + 2 S-adenosyl-L-methionine + 4 H(+) = [[Fe-S] cluster scaffold protein] + N(6)-[(R)-dihydrolipoyl]-L-lysyl-[protein] + 4 Fe(3+) + 2 hydrogen sulfide + 2 5'-deoxyadenosine + 2 L-methionine + 2 reduced [2Fe-2S]-[ferredoxin]. It participates in protein modification; protein lipoylation via endogenous pathway; protein N(6)-(lipoyl)lysine from octanoyl-[acyl-carrier-protein]: step 2/2. Its function is as follows. Catalyzes the radical-mediated insertion of two sulfur atoms into the C-6 and C-8 positions of the octanoyl moiety bound to the lipoyl domains of lipoate-dependent enzymes, thereby converting the octanoylated domains into lipoylated derivatives. The protein is Lipoyl synthase of Wolbachia pipientis subsp. Culex pipiens (strain wPip).